The chain runs to 55 residues: Large ribosomal subunit protein bL33B (55 aa).

It belongs to the bacterial ribosomal protein bL33 family.

The sequence is that of Large ribosomal subunit protein bL33B from Salinispora arenicola (strain CNS-205).